Here is a 238-residue protein sequence, read N- to C-terminus: Ribonuclease PH (238 aa).

Phosphate-binding positions include Arg86 and 124-126; that span reads GTR.

Belongs to the RNase PH family. Homohexameric ring arranged as a trimer of dimers.

It catalyses the reaction tRNA(n+1) + phosphate = tRNA(n) + a ribonucleoside 5'-diphosphate. Phosphorolytic 3'-5' exoribonuclease that plays an important role in tRNA 3'-end maturation. Removes nucleotide residues following the 3'-CCA terminus of tRNAs; can also add nucleotides to the ends of RNA molecules by using nucleoside diphosphates as substrates, but this may not be physiologically important. Probably plays a role in initiation of 16S rRNA degradation (leading to ribosome degradation) during starvation. The protein is Ribonuclease PH of Acinetobacter baumannii (strain AB307-0294).